The chain runs to 61 residues: Conotoxin Vn5.3 (61 aa).

Positions Met1–Gly19 are cleaved as a signal peptide. A propeptide spanning residues Val20–Arg50 is cleaved from the precursor.

The protein belongs to the conotoxin T superfamily. In terms of processing, contains 2 disulfide bonds that can be either 'C1-C3, C2-C4' or 'C1-C4, C2-C3', since these disulfide connectivities have been observed for conotoxins with cysteine framework V (for examples, see AC P0DQQ7 and AC P81755). As to expression, expressed by the venom duct.

It is found in the secreted. The sequence is that of Conotoxin Vn5.3 from Conus ventricosus (Mediterranean cone).